The following is a 202-amino-acid chain: LexA repressor (202 aa).

Residues 28–48 constitute a DNA-binding region (H-T-H motif); the sequence is RAEIAQELGFKSPNAAEEHLK. Catalysis depends on for autocatalytic cleavage activity residues serine 123 and lysine 160.

Belongs to the peptidase S24 family. In terms of assembly, homodimer.

The enzyme catalyses Hydrolysis of Ala-|-Gly bond in repressor LexA.. Its function is as follows. Represses a number of genes involved in the response to DNA damage (SOS response), including recA and lexA. In the presence of single-stranded DNA, RecA interacts with LexA causing an autocatalytic cleavage which disrupts the DNA-binding part of LexA, leading to derepression of the SOS regulon and eventually DNA repair. The sequence is that of LexA repressor from Pseudomonas chlororaphis (Pseudomonas aureofaciens).